A 596-amino-acid chain; its full sequence is Transcription factor COE3 (596 aa).

The tract at residues 1–22 is disordered; it reads MFGIQENIPRGGTTMKEEPLGS. An interaction with DNA region spans residues 63 to 66; the sequence is RKSN. The segment at 151–170 adopts a C5-type zinc-finger fold; that stretch reads CRVLLTHEIMCSRCCDKKSC. Interaction with DNA regions lie at residues 197–204 and 236–239; these read NCLKNAGN and NNSK. One can recognise an IPT/TIG domain in the interval 263–346; that stretch reads PCIKAISPSE…KGAPGRFVYT (84 aa). The disordered stretch occupies residues 451–483; that stretch reads TSQANDQVGYSRNTSSVSPRGYVPSSTPQQSNY.

It belongs to the COE family. As to quaternary structure, forms either a homodimer or a heterodimer with a related family member. As to expression, expressed in brain.

The protein localises to the nucleus. Functionally, transcriptional activator. Recognizes variations of the palindromic sequence 5'-ATTCCCNNGGGAATT-3'. The sequence is that of Transcription factor COE3 (EBF3) from Homo sapiens (Human).